The chain runs to 2028 residues: Transient receptor potential cation channel subfamily M member 6 (2028 aa).

At 1-747 (MQVKKSWIEG…MWMGRLKMRK (747 aa)) the chain is on the cytoplasmic side. The interval 577–601 (QPYKSKEKPEDSQKSKKKSKERQSL) is disordered. Basic and acidic residues predominate over residues 580 to 590 (KSKEKPEDSQK). Residues 748–768 (NSWLKIIISILLPPMILTLEF) form a helical membrane-spanning segment. Residues 769–847 (KSKAEMSHVP…YEFYSAPFVK (79 aa)) are Extracellular-facing. A helical transmembrane segment spans residues 848–868 (FWFYTMAYLAFLMLFTYTVLV). Over 869–910 (EMQPQPSVHEWLVIIYIFTNAIEKVREICISEPSKFKQKVKM) the chain is Cytoplasmic. Residues 911-931 (WLSEYWNLMETVAIGLFAVGF) traverse the membrane as a helical segment. Residues 932-945 (GLRWGHPPLQTAGR) are Extracellular-facing. A helical transmembrane segment spans residues 946 to 966 (LIYCIDIIFWFSRLMDFFAVN). Over 967–978 (QHAGPYVTMIAK) the chain is Cytoplasmic. A helical transmembrane segment spans residues 979 to 999 (MAANMFYIVIIMAIVLLSFGV). Residues 1000-1018 (ARKAILSPKEPPSWRLARD) lie on the Extracellular side of the membrane. The pore-forming intramembrane region spans 1019 to 1039 (IVFEPYWMMYGEVYASDIDVC). Over 1040–1053 (SNETSCPPGSFLTP) the chain is Extracellular. The chain crosses the membrane as a helical span at residues 1054–1074 (FLQAVYLFVQYIIMVNLLIAC). Topologically, residues 1075–2028 (FNNIYLDIKS…RSSLEDHTRL (954 aa)) are cytoplasmic. 2 stretches are compositionally biased toward basic and acidic residues: residues 1313 to 1323 (KREASHVREEQ) and 1665 to 1677 (DHLRQPQENRDKT). Disordered stretches follow at residues 1313 to 1339 (KREASHVREEQEEREMEQRTTASGISH) and 1658 to 1694 (RHTTQASDHLRQPQENRDKTPTWNSGSTSLSRSFLTR). Residues 1682 to 1694 (SGSTSLSRSFLTR) are compositionally biased toward low complexity. Thr-1730 bears the Phosphothreonine; by autocatalysis mark. The Alpha-type protein kinase domain maps to 1756–1986 (TLDKSMSSWS…CCGKLRLPDL (231 aa)). ADP is bound by residues Gly-1783, Gly-1784, Leu-1785, Arg-1786, and Lys-1810. A Phosphothreonine; by autocatalysis modification is found at Thr-1857. Glu-1882 and Met-1885 together coordinate ADP. His-1915 contributes to the Zn(2+) binding site. Catalysis depends on Asp-1929, which acts as the Proton acceptor. ADP is bound at residue Asp-1939. Residues His-1972, Cys-1974, and Cys-1978 each contribute to the Zn(2+) site. Residues 2009 to 2028 (TEELPERDKNRSSLEDHTRL) are disordered. The span at 2012–2028 (LPERDKNRSSLEDHTRL) shows a compositional bias: basic and acidic residues.

It in the C-terminal section; belongs to the protein kinase superfamily. Alpha-type protein kinase family. ALPK subfamily. In the N-terminal section; belongs to the transient receptor (TC 1.A.4) family. LTrpC subfamily. TRPM6 sub-subfamily. Forms heteromers with TRPM7; TRPM6 increases the current amplitude of TRPM6/7 heteromers as compared to TRPM7 homomers. Interacts (via kinase domain) with RACK1. Post-translationally, autophosphorylated; autophosphorylation controls the protein kinase activity of TRPM6 towards their substrates. Autophosphorylation of Thr-1857 in the kinase domain is essential for the inhibitory effect of RACK1. In terms of processing, the C-terminus of TRPM6 is proteolytically cleaved in vivo, in a cell type-specific fashion, releasing the kinase module from the transmembrane domain. The cleaved kinase fragments are translocated to the nucleus to phosphorylate histones and regulate gene expression.

The protein resides in the cell membrane. It localises to the apical cell membrane. Its subcellular location is the nucleus. The catalysed reaction is L-seryl-[protein] + ATP = O-phospho-L-seryl-[protein] + ADP + H(+). It catalyses the reaction L-threonyl-[protein] + ATP = O-phospho-L-threonyl-[protein] + ADP + H(+). It carries out the reaction Mg(2+)(in) = Mg(2+)(out). The enzyme catalyses Ca(2+)(in) = Ca(2+)(out). The catalysed reaction is Zn(2+)(in) = Zn(2+)(out). Its activity is regulated as follows. Strongly inhibited by intracellular Mg(2+); unlikely to be active at physiological levels of intracellular Mg(2+). In the heteromeric TRPM6-TRPM7 channels complexes, TRPM7 are able to offset the very high sensitivity of TRPM6 to cytosolic Mg(2+) to physiologically relevant concentrations, whereas TRPM6 relieve TRPM7 from the inhibitory action of Mg-ATP. Consequently, the association of TRPM6 with TRPM7 allow for high constitutive activity of TRPM6/7 in the presence of physiological levels of Mg(2+) and Mg-ATP. The kinase activity is controlled through the autophosphorylation of a serine/threonine-rich region located to the N-terminal of the catalytic domain. Bifunctional protein that combines an ion channel with an intrinsic kinase domain, enabling it to modulate cellular functions either by conducting ions through the pore or by phosphorylating downstream proteins via its kinase domain. Crucial for Mg(2+) homeostasis. Has an important role in epithelial magnesium transport and in the active Mg(2+) absorption in the gut and kidney. However, whether TRPM6 forms functional homomeric channels by itself or functions primarily as a subunit of heteromeric TRPM6-TRPM7 channels, is still under debate. Functionally, the C-terminal kinase domain can be cleaved from the channel segment in a cell-type-specific fashion. The cleaved kinase fragments can translocate to the nucleus, and bind chromatin-remodeling complex proteins to ultimately phosphorylate specific Ser/Thr residues of histones known to be functionally important for cell differentiation and development. The sequence is that of Transient receptor potential cation channel subfamily M member 6 (Trpm6) from Mus musculus (Mouse).